The following is an 82-amino-acid chain: Protein WFDC11 (82 aa).

The signal sequence occupies residues 1–21 (MKPSWFPCLVFLCMLLLSALG).

The protein localises to the secreted. This is Protein WFDC11 (Wfdc11) from Mus musculus (Mouse).